Consider the following 509-residue polypeptide: Cytochrome P450 monooxygenase hepC (509 aa).

Residues 5 to 25 traverse the membrane as a helical segment; that stretch reads MIIPSFWTGTAIIGLVACAYV. Cys-454 lines the heme pocket. N-linked (GlcNAc...) asparagine glycosylation occurs at Asn-491.

It belongs to the cytochrome P450 family. Requires heme as cofactor.

The protein localises to the membrane. Its pathway is secondary metabolite biosynthesis. In terms of biological role, cytochrome P450 monooxygenase; part of the gene cluster that mediates the biosynthesis of heptelidic acid (HA), a sesquiterpene lactone that acts as an inhibitor of glyceraldehyde-3-phosphatedehydrogenase (GAPDH) and a growth inhibitor of the salt-tolerant lactic acid bacteria in soy sauce brewing. This is Cytochrome P450 monooxygenase hepC from Aspergillus oryzae (strain ATCC 42149 / RIB 40) (Yellow koji mold).